The following is a 481-amino-acid chain: Endonuclease Bax1 (481 aa).

The segment at 1-136 (MLPWELARFS…EKKIIKAPTI (136 aa)) is N-terminal domain (NTD). A central domain (CRD) region spans residues 158-250 (YKLTVYVSSN…LKLANFKELK (93 aa)). The tract at residues 260-364 (DSSVEEKFYK…YKRKIDISLV (105 aa)) is nuclease domain (NUS). Residues Glu-265, Asp-297, and Glu-310 each contribute to the a divalent metal cation site. The interval 414-481 (PGYIFLKNYY…AIVIKDKKVN (68 aa)) is C-terminal domain (CTD).

This sequence belongs to the Bax1 family. In terms of assembly, homodimer in solution, forms a heterodimer with XPB2. A divalent metal cation is required as a cofactor.

In terms of biological role, a dual DNA endonuclease probably involved in nucleotide excision repair (NER). The N-terminal nuclease domain (NTD) of the XPB2-Bax1 complex cleaves on one side of a DNA bubble (which presumably mimics DNA damage), while the NUS nuclease domain cleaves the other side, respectively called 5' and 3' nuclease activities. Interaction with XPB blocks the NTD nuclease activity. Binds to and stimulates the ATPase activity (and probably also helicase activity) of XPB2. Increases affinity of XPB2 for forked DNA. Does not stimulate the DNA-dependent activity of XPB1. In an XPB2-Bax1-bubble DNA crystal (12 bp of dsDNA, a 6 base bubble and 6 bp of dsDNA) the short 6 bp arm is unwound. The 2 helicase and the ThM domains of XPB2 with the NTD and CRD domains of Bax1 encircle the DNA, forming a tunnel where the 12 bp dsDNA and the ds-ssDNA junction are located. The ThM domain is wedged between the ssDNA tails, with the 5' ssDNA contacting Bax1 and the 3' ssDNA in a channel in XPB2. The nuclease domain (NUS) of Bax1 does not contact DNA in the bubble DNA complex. This chain is Endonuclease Bax1, found in Sulfurisphaera tokodaii (strain DSM 16993 / JCM 10545 / NBRC 100140 / 7) (Sulfolobus tokodaii).